Consider the following 70-residue polypeptide: Large ribosomal subunit protein eL38 (70 aa).

The protein belongs to the eukaryotic ribosomal protein eL38 family.

The polypeptide is Large ribosomal subunit protein eL38 (RpL38) (Aedes aegypti (Yellowfever mosquito)).